A 118-amino-acid polypeptide reads, in one-letter code: Ribonuclease P protein component 2 (118 aa).

It belongs to the eukaryotic/archaeal RNase P protein component 2 family. As to quaternary structure, consists of a catalytic RNA component and at least 4-5 protein subunits.

The protein localises to the cytoplasm. It carries out the reaction Endonucleolytic cleavage of RNA, removing 5'-extranucleotides from tRNA precursor.. Its function is as follows. Part of ribonuclease P, a protein complex that generates mature tRNA molecules by cleaving their 5'-ends. The sequence is that of Ribonuclease P protein component 2 from Pyrococcus abyssi (strain GE5 / Orsay).